Here is a 150-residue protein sequence, read N- to C-terminus: Heat shock protein beta-3 (150 aa).

The 104-residue stretch at 47–150 (KTRAAQSPPV…VEVKDPVGTK (104 aa)) folds into the sHSP domain.

This sequence belongs to the small heat shock protein (HSP20) family.

It localises to the cytoplasm. The protein localises to the nucleus. Its function is as follows. Inhibitor of actin polymerization. This is Heat shock protein beta-3 (HSPB3) from Homo sapiens (Human).